Here is a 264-residue protein sequence, read N- to C-terminus: Acyl-[acyl-carrier-protein]--UDP-N-acetylglucosamine O-acyltransferase (264 aa).

Belongs to the transferase hexapeptide repeat family. LpxA subfamily. Homotrimer.

The protein localises to the cytoplasm. It catalyses the reaction a (3R)-hydroxyacyl-[ACP] + UDP-N-acetyl-alpha-D-glucosamine = a UDP-3-O-[(3R)-3-hydroxyacyl]-N-acetyl-alpha-D-glucosamine + holo-[ACP]. It participates in glycolipid biosynthesis; lipid IV(A) biosynthesis; lipid IV(A) from (3R)-3-hydroxytetradecanoyl-[acyl-carrier-protein] and UDP-N-acetyl-alpha-D-glucosamine: step 1/6. Functionally, involved in the biosynthesis of lipid A, a phosphorylated glycolipid that anchors the lipopolysaccharide to the outer membrane of the cell. The chain is Acyl-[acyl-carrier-protein]--UDP-N-acetylglucosamine O-acyltransferase from Rickettsia canadensis (strain McKiel).